The chain runs to 215 residues: 3-isopropylmalate dehydratase small subunit (215 aa).

Belongs to the LeuD family. LeuD type 1 subfamily. In terms of assembly, heterodimer of LeuC and LeuD.

It carries out the reaction (2R,3S)-3-isopropylmalate = (2S)-2-isopropylmalate. It functions in the pathway amino-acid biosynthesis; L-leucine biosynthesis; L-leucine from 3-methyl-2-oxobutanoate: step 2/4. In terms of biological role, catalyzes the isomerization between 2-isopropylmalate and 3-isopropylmalate, via the formation of 2-isopropylmaleate. The protein is 3-isopropylmalate dehydratase small subunit of Polynucleobacter necessarius subsp. necessarius (strain STIR1).